Consider the following 606-residue polypeptide: UvrABC system protein C (606 aa).

The GIY-YIG domain occupies 19–97 (QSCGVYQMIG…IKSLKPPYNI (79 aa)). Positions 207–242 (EKVKKQLSSTMEKCSKEENYELAAIYRDRLKFLEQI) constitute a UVR domain.

It belongs to the UvrC family. In terms of assembly, interacts with UvrB in an incision complex.

It is found in the cytoplasm. The UvrABC repair system catalyzes the recognition and processing of DNA lesions. UvrC both incises the 5' and 3' sides of the lesion. The N-terminal half is responsible for the 3' incision and the C-terminal half is responsible for the 5' incision. This Wolbachia sp. subsp. Brugia malayi (strain TRS) protein is UvrABC system protein C.